The chain runs to 368 residues: tRNA-specific 2-thiouridylase MnmA (368 aa).

ATP-binding positions include 11-18 (GMSGGVDS) and Met-37. The segment at 97–99 (NPD) is interaction with target base in tRNA. Cys-102 functions as the Nucleophile in the catalytic mechanism. Cys-102 and Cys-199 are joined by a disulfide. Gly-127 serves as a coordination point for ATP. Residues 149 to 151 (KDQ) form an interaction with tRNA region. The active-site Cysteine persulfide intermediate is the Cys-199. Residues 311–312 (RY) form an interaction with tRNA region.

This sequence belongs to the MnmA/TRMU family. As to quaternary structure, interacts with TusE.

Its subcellular location is the cytoplasm. The enzyme catalyses S-sulfanyl-L-cysteinyl-[protein] + uridine(34) in tRNA + AH2 + ATP = 2-thiouridine(34) in tRNA + L-cysteinyl-[protein] + A + AMP + diphosphate + H(+). Catalyzes the 2-thiolation of uridine at the wobble position (U34) of tRNA(Lys), tRNA(Glu) and tRNA(Gln), leading to the formation of s(2)U34, the first step of tRNA-mnm(5)s(2)U34 synthesis. Sulfur is provided by IscS, via a sulfur-relay system. Binds ATP and its substrate tRNAs. This Shigella boydii serotype 18 (strain CDC 3083-94 / BS512) protein is tRNA-specific 2-thiouridylase MnmA.